Reading from the N-terminus, the 511-residue chain is Cytochrome P450 71A6 (511 aa).

The next 2 helical transmembrane spans lie at 1 to 15 and 61 to 77; these read ILIALLCTLPFLFFL and VMQLHFGSVPVLVASSP. Residues Asn-90, Asn-96, and Asn-167 are each glycosylated (N-linked (GlcNAc...) asparagine). Cys-450 contacts heme.

Belongs to the cytochrome P450 family. It depends on heme as a cofactor.

It localises to the membrane. The protein is Cytochrome P450 71A6 (CYP71A6) of Nepeta racemosa (Catmint).